The chain runs to 359 residues: tRNA-specific 2-thiouridylase MnmA (359 aa).

Residues 9–16 (GISGGVDS) and Met-35 each bind ATP. An interaction with target base in tRNA region spans residues 95-97 (NPD). Cys-100 (nucleophile) is an active-site residue. Cys-100 and Cys-197 are oxidised to a cystine. Residue Gly-124 participates in ATP binding. The interaction with tRNA stretch occupies residues 147–149 (KDQ). The active-site Cysteine persulfide intermediate is the Cys-197. An interaction with tRNA region spans residues 309 to 310 (RY).

This sequence belongs to the MnmA/TRMU family.

Its subcellular location is the cytoplasm. It carries out the reaction S-sulfanyl-L-cysteinyl-[protein] + uridine(34) in tRNA + AH2 + ATP = 2-thiouridine(34) in tRNA + L-cysteinyl-[protein] + A + AMP + diphosphate + H(+). Functionally, catalyzes the 2-thiolation of uridine at the wobble position (U34) of tRNA, leading to the formation of s(2)U34. The polypeptide is tRNA-specific 2-thiouridylase MnmA (Francisella tularensis subsp. tularensis (strain WY96-3418)).